A 368-amino-acid chain; its full sequence is Anhydro-N-acetylmuramic acid kinase (368 aa).

Residue 11-18 (GTSLDGID) participates in ATP binding.

Belongs to the anhydro-N-acetylmuramic acid kinase family.

It catalyses the reaction 1,6-anhydro-N-acetyl-beta-muramate + ATP + H2O = N-acetyl-D-muramate 6-phosphate + ADP + H(+). Its pathway is amino-sugar metabolism; 1,6-anhydro-N-acetylmuramate degradation. The protein operates within cell wall biogenesis; peptidoglycan recycling. Catalyzes the specific phosphorylation of 1,6-anhydro-N-acetylmuramic acid (anhMurNAc) with the simultaneous cleavage of the 1,6-anhydro ring, generating MurNAc-6-P. Is required for the utilization of anhMurNAc either imported from the medium or derived from its own cell wall murein, and thus plays a role in cell wall recycling. This Sulfurimonas denitrificans (strain ATCC 33889 / DSM 1251) (Thiomicrospira denitrificans (strain ATCC 33889 / DSM 1251)) protein is Anhydro-N-acetylmuramic acid kinase.